A 211-amino-acid chain; its full sequence is uncharacterized protein (211 aa).

A signal peptide spans 1 to 27 (MKRTSAALVVFLILLFLGLLFLPMFIV).

This is an uncharacterized protein from Archaeoglobus fulgidus (strain ATCC 49558 / DSM 4304 / JCM 9628 / NBRC 100126 / VC-16).